The sequence spans 293 residues: Group 3 late-embryogenesis abundant protein, mitochondrial (293 aa).

Residues 1 to 31 (MFLARNAGRAGYRGVVAYQQAASFSVSSAKA) constitute a mitochondrion transit peptide. Positions 27–43 (SSAKAAGSRSSGGSDAG) are enriched in low complexity. A disordered region spans residues 27–52 (SSAKAAGSRSSGGSDAGDYAREAAEH). 9 LEA 11-mer repeat repeats span residues 58–68 (KDLKNEASWKA), 83–93 (KDTVKEGVHDM), 123–133 (KNAAQDTAATL), 134–144 (KDKAGSAWNQA), 145–155 (KHVVEDKGEDV), 160–170 (KDTASKVWGKA), 171–181 (KHVAEDVKENA), 199–209 (KDKAADVLSGA), and 210–220 (KHTAENLAHKA). Residues 217–293 (AHKAQAAIHD…KGPGQAGGRR (77 aa)) form a disordered region. Over residues 230–265 (SSGSQSQSQSQSQYRQGQQQGRQDQQQSKSQWGQTS) the composition is skewed to low complexity. A compositionally biased stretch (gly residues) spans 279-293 (GPQGGKGPGQAGGRR).

The protein belongs to the LEA type 4 family.

It is found in the mitochondrion. Its function is as follows. Mitochondrial heat soluble protein acting as a molecular shield in water-deficient condition. The chain is Group 3 late-embryogenesis abundant protein, mitochondrial from Ramazzottius varieornatus (Water bear).